The sequence spans 131 residues: Large ribosomal subunit protein bL19 (131 aa).

The protein belongs to the bacterial ribosomal protein bL19 family.

This protein is located at the 30S-50S ribosomal subunit interface and may play a role in the structure and function of the aminoacyl-tRNA binding site. The protein is Large ribosomal subunit protein bL19 of Polynucleobacter necessarius subsp. necessarius (strain STIR1).